Consider the following 401-residue polypeptide: Chalcone synthase 6 (401 aa).

C168 is a catalytic residue.

The protein belongs to the thiolase-like superfamily. Chalcone/stilbene synthases family.

It catalyses the reaction (E)-4-coumaroyl-CoA + 3 malonyl-CoA + 3 H(+) = 2',4,4',6'-tetrahydroxychalcone + 3 CO2 + 4 CoA. Its pathway is secondary metabolite biosynthesis; flavonoid biosynthesis. In terms of biological role, the primary product of this enzyme is 4,2',4',6'-tetrahydroxychalcone (also termed naringenin-chalcone or chalcone) which can under specific conditions spontaneously isomerize into naringenin. This is Chalcone synthase 6 (CHS6) from Sorghum bicolor (Sorghum).